The following is a 712-amino-acid chain: Rap1 GTPase-activating protein 2 (712 aa).

The disordered stretch occupies residues 1–33; sequence MLAGLKVKKQELANSSDVTLPDRPLSPPLTAPP. A Phosphoserine modification is found at S26. At T30 the chain carries Phosphothreonine. One can recognise a Rap-GAP domain in the interval 229–445; sequence IVSYDEHDVN…RTRAALLDNL (217 aa). A phosphoserine mark is found at S488, S495, S525, S539, S545, S593, and S594. The disordered stretch occupies residues 529–712; that stretch reads AAATAKNQSR…LSHASSSAGH (184 aa). The span at 566–594 shows a compositional bias: polar residues; sequence DSASSTPKTPDGGHSSQEIKSETSSNPSS. Residues 599–612 are compositionally biased toward basic and acidic residues; the sequence is PNKEKPFIKLKENG. The span at 617–629 shows a compositional bias: low complexity; the sequence is SRSSSSTSSFSST. The segment covering 641–652 has biased composition (polar residues); that stretch reads SGSSQPSTTSPF. The segment covering 660–669 has biased composition (low complexity); it reads SPSPSSESPS. A compositionally biased stretch (polar residues) spans 681–694; it reads RSPTDAKSRNSPRS.

It is found in the cytoplasm. GTPase activator for the nuclear Ras-related regulatory protein RAP-1A (KREV-1), converting it to the putatively inactive GDP-bound state. The polypeptide is Rap1 GTPase-activating protein 2 (Rap1gap2) (Mus musculus (Mouse)).